We begin with the raw amino-acid sequence, 342 residues long: Sorting nexin-15 (342 aa).

Residues 1-130 enclose the PX domain; it reads MSRQAKDDFL…EFFRGGEVTR (130 aa). Arg51, Ser53, Arg87, and Arg96 together coordinate a 1,2-diacyl-sn-glycero-3-phospho-(1D-myo-inositol-3-phosphate). Arg105 bears the Omega-N-methylarginine mark. Residues Ser201 and Ser227 each carry the phosphoserine modification. The disordered stretch occupies residues 245–267; the sequence is DQEPWEPGGQEEEEDGEGGPTPA. The 78-residue stretch at 265–342 folds into the MIT domain; the sequence is TPAYLSQATE…LRLHLSQLPP (78 aa).

It belongs to the sorting nexin family. In terms of assembly, homodimer. Interacts with SNX1, SNX2 and SNX4. As to expression, widely expressed.

It is found in the cytoplasm. It localises to the membrane. Its subcellular location is the cytoplasmic vesicle membrane. Functionally, may be involved in several stages of intracellular trafficking. Overexpression of SNX15 disrupts the normal trafficking of proteins from the plasma membrane to recycling endosomes or the TGN. This chain is Sorting nexin-15 (SNX15), found in Homo sapiens (Human).